The following is a 105-amino-acid chain: uncharacterized protein (105 aa).

It localises to the mitochondrion. This is an uncharacterized protein from Paramecium tetraurelia.